Reading from the N-terminus, the 310-residue chain is Beta-carotene 3-hydroxylase 1, chloroplastic (310 aa).

The N-terminal 51 residues, 1–51 (MAAGLSTAVTFKPLHRSFSSSSTDFRLRLPKSLSGFSPSLRFKRFSVCYVV), are a transit peptide targeting the chloroplast. 2 consecutive transmembrane segments (helical) span residues 98–118 (YLIA…MAVY) and 132–152 (MLEM…MEFW). In terms of domain architecture, Fatty acid hydroxylase spans 145-272 (AAVGMEFWAR…KFNGVPYGLF (128 aa)). The short motif at 157–162 (HRALWH) is the Histidine box-1 element. Residues 169-173 (HESHH) carry the Histidine box-2 motif. 2 helical membrane passes run 183-203 (NDVF…YGFF) and 208-228 (VPGL…AYMF). The Histidine box-3 signature appears at 230 to 235 (HDGLVH). Positions 256-260 (HQLHH) match the Histidine box-4 motif.

Belongs to the sterol desaturase family. In terms of assembly, homodimer. Expressed in leaves, flowers, stems, roots and siliques.

Its subcellular location is the plastid. It localises to the chloroplast membrane. The catalysed reaction is all-trans-beta-carotene + 4 reduced [2Fe-2S]-[ferredoxin] + 2 O2 + 4 H(+) = all-trans-zeaxanthin + 4 oxidized [2Fe-2S]-[ferredoxin] + 2 H2O. Functionally, nonheme diiron monooxygenase involved in the biosynthesis of xanthophylls. Specific for beta-ring hydroxylations of beta-carotene. Also has a low activity toward the beta- and epsilon-rings of alpha-carotene. No activity with acyclic carotenoids such as lycopene and neurosporene. Uses ferredoxin as an electron donor. This is Beta-carotene 3-hydroxylase 1, chloroplastic (BETA-OHASE 1) from Arabidopsis thaliana (Mouse-ear cress).